The following is a 271-amino-acid chain: NADPH-dependent 7-cyano-7-deazaguanine reductase (271 aa).

81-83 is a substrate binding site; it reads IES. 83-84 is an NADPH binding site; that stretch reads SK. Cys-177 functions as the Thioimide intermediate in the catalytic mechanism. Asp-184 (proton donor) is an active-site residue. 216-217 is a substrate binding site; sequence HE. An NADPH-binding site is contributed by 245-246; sequence RG.

This sequence belongs to the GTP cyclohydrolase I family. QueF type 2 subfamily. Homodimer.

It is found in the cytoplasm. It catalyses the reaction 7-aminomethyl-7-carbaguanine + 2 NADP(+) = 7-cyano-7-deazaguanine + 2 NADPH + 3 H(+). Its pathway is tRNA modification; tRNA-queuosine biosynthesis. In terms of biological role, catalyzes the NADPH-dependent reduction of 7-cyano-7-deazaguanine (preQ0) to 7-aminomethyl-7-deazaguanine (preQ1). In Xanthomonas oryzae pv. oryzae (strain MAFF 311018), this protein is NADPH-dependent 7-cyano-7-deazaguanine reductase.